The primary structure comprises 422 residues: Fasciclin-like arabinogalactan protein 10 (422 aa).

The N-terminal stretch at 1–25 (MATSRAFTLFAFTLSLLTVASTVSG) is a signal peptide. 2 consecutive FAS1 domains span residues 26-172 (HNIT…NAPI) and 187-327 (GVSN…DNVL). N-linked (GlcNAc...) asparagine glycosylation is found at Asn-27, Asn-128, Asn-162, Asn-190, and Asn-244. The disordered stretch occupies residues 336 to 397 (SSSPAPAPEP…PTSSENSNAK (62 aa)). Residues 340–374 (APAPEPVSAPTPTPAKSPSPVEAPSPTAASPPAPP) are compositionally biased toward pro residues. A compositionally biased stretch (polar residues) spans 386 to 397 (DSPTSSENSNAK). Asn-398 carries GPI-anchor amidated asparagine lipidation. A propeptide spans 399-422 (AAFHVNAPALFTALVTIAATSLLL) (removed in mature form).

It belongs to the fasciclin-like AGP family.

The protein localises to the cell membrane. In terms of biological role, may be a cell surface adhesion protein. The sequence is that of Fasciclin-like arabinogalactan protein 10 (FLA10) from Arabidopsis thaliana (Mouse-ear cress).